We begin with the raw amino-acid sequence, 329 residues long: Glycosyltransferase family protein 64 C3 (329 aa).

A signal peptide spans 1–27; that stretch reads MGVKSVRFSIWFLFVVTDLVFCRTLSG. Residue Asn-99 is glycosylated (N-linked (GlcNAc...) asparagine). Substrate contacts are provided by residues 118 to 123, 139 to 141, Arg-169, 226 to 230, and 271 to 284; these read SSLNAR, DDD, RNCED, and VGLS…RKRR. Residue Asp-141 coordinates Mn(2+). Cys-228 and Cys-287 are joined by a disulfide. Asp-230 is a catalytic residue. Positions 268–284 are substrate binding; it reads VRDVGLSSRRVEHRKRR.

Belongs to the glycosyltransferase 64 family. It depends on Mn(2+) as a cofactor.

It participates in protein modification; protein glycosylation. Its function is as follows. Probable glycosyltransferase. In Arabidopsis thaliana (Mouse-ear cress), this protein is Glycosyltransferase family protein 64 C3.